A 173-amino-acid polypeptide reads, in one-letter code: Cyclic pyranopterin monophosphate synthase (173 aa).

Substrate-binding positions include 75–77 and 117–118; these read MCH and ME. The active site involves D132. The tract at residues 152 to 173 is disordered; the sequence is SGGKSGHYQRENSSVGGFANEQ. Polar residues predominate over residues 162-173; sequence ENSSVGGFANEQ.

Belongs to the MoaC family. In terms of assembly, homohexamer; trimer of dimers.

It carries out the reaction (8S)-3',8-cyclo-7,8-dihydroguanosine 5'-triphosphate = cyclic pyranopterin phosphate + diphosphate. The protein operates within cofactor biosynthesis; molybdopterin biosynthesis. Catalyzes the conversion of (8S)-3',8-cyclo-7,8-dihydroguanosine 5'-triphosphate to cyclic pyranopterin monophosphate (cPMP). The polypeptide is Cyclic pyranopterin monophosphate synthase (Geobacillus sp. (strain WCH70)).